A 151-amino-acid polypeptide reads, in one-letter code: UPF0735 ACT domain-containing protein SAUSA300_1599 (151 aa).

Positions 74-149 (TLILYVTDIV…YVSKVELISM (76 aa)) constitute an ACT domain.

It belongs to the UPF0735 family.

The protein is UPF0735 ACT domain-containing protein SAUSA300_1599 of Staphylococcus aureus (strain USA300).